We begin with the raw amino-acid sequence, 72 residues long: Translation initiation factor IF-1 (72 aa).

The S1-like domain maps to 1–72 (MAKTDLLEVQ…ERGRIVFRHK (72 aa)).

This sequence belongs to the IF-1 family. In terms of assembly, component of the 30S ribosomal translation pre-initiation complex which assembles on the 30S ribosome in the order IF-2 and IF-3, IF-1 and N-formylmethionyl-tRNA(fMet); mRNA recruitment can occur at any time during PIC assembly.

It is found in the cytoplasm. Its function is as follows. One of the essential components for the initiation of protein synthesis. Stabilizes the binding of IF-2 and IF-3 on the 30S subunit to which N-formylmethionyl-tRNA(fMet) subsequently binds. Helps modulate mRNA selection, yielding the 30S pre-initiation complex (PIC). Upon addition of the 50S ribosomal subunit IF-1, IF-2 and IF-3 are released leaving the mature 70S translation initiation complex. The protein is Translation initiation factor IF-1 of Spiroplasma kunkelii.